The primary structure comprises 161 residues: Transcriptional repressor NrdR (161 aa).

Polar residues predominate over residues 1 to 11 (MRCPSCSSLDT). The tract at residues 1–20 (MRCPSCSSLDTQVKDSRPTE) is disordered. A zinc finger lies at 3–34 (CPSCSSLDTQVKDSRPTEDSAVIRRRRVCMAC). An ATP-cone domain is found at 49–139 (LTVIKRNGRR…VYRNFREAKD (91 aa)).

The protein belongs to the NrdR family. Zn(2+) is required as a cofactor.

Negatively regulates transcription of bacterial ribonucleotide reductase nrd genes and operons by binding to NrdR-boxes. The chain is Transcriptional repressor NrdR from Rhodopseudomonas palustris (strain BisB18).